The primary structure comprises 485 residues: Glutamate--tRNA ligase (485 aa).

Positions 11 to 21 (PSPTGHLHIGG) match the 'HIGH' region motif. The short motif at 252 to 256 (KMSKR) is the 'KMSKS' region element. Lys-255 lines the ATP pocket.

It belongs to the class-I aminoacyl-tRNA synthetase family. Glutamate--tRNA ligase type 1 subfamily. Monomer.

The protein resides in the cytoplasm. The enzyme catalyses tRNA(Glu) + L-glutamate + ATP = L-glutamyl-tRNA(Glu) + AMP + diphosphate. Catalyzes the attachment of glutamate to tRNA(Glu) in a two-step reaction: glutamate is first activated by ATP to form Glu-AMP and then transferred to the acceptor end of tRNA(Glu). The chain is Glutamate--tRNA ligase from Halalkalibacterium halodurans (strain ATCC BAA-125 / DSM 18197 / FERM 7344 / JCM 9153 / C-125) (Bacillus halodurans).